The chain runs to 4047 residues: Cubilin homolog (4047 aa).

The N-terminal stretch at 1 to 22 (MIPNLQLFLSLILFGLLNHVSS) is a signal peptide. Residues Asn56, Asn92, and Asn127 are each glycosylated (N-linked (GlcNAc...) asparagine). The EGF-like 1 domain maps to 168-205 (AINACDPNKCSNGGTCIPSFGAKFTCLCPPHFTGTTCE). 26 disulfide bridges follow: Cys172/Cys183, Cys177/Cys193, Cys195/Cys204, Cys211/Cys227, Cys221/Cys236, Cys238/Cys247, Cys310/Cys321, Cys315/Cys330, Cys333/Cys344, Cys350/Cys363, Cys357/Cys372, Cys375/Cys386, Cys392/Cys403, Cys397/Cys418, Cys420/Cys434, Cys442/Cys453, Cys447/Cys463, Cys465/Cys474, Cys480/Cys491, Cys485/Cys500, Cys502/Cys511, Cys518/Cys544, Cys577/Cys601, Cys645/Cys667, Cys696/Cys719, and Cys769/Cys801. The EGF-like 2; calcium-binding domain occupies 207 to 248 (DIDECSVYNGTTAGCQNNGTCINNRGGFECQCQSGYHGSLCQ). Residues Asn215 and Asn224 are each glycosylated (N-linked (GlcNAc...) asparagine). The EGF-like 3; calcium-binding domain maps to 306–345 (DVNECESNPCHPGVDCINLPGSFVCSGCPKGYKTDGNVCI). The region spanning 346 to 387 (DVNECEGEIRVCSPLSKCHNTLGSYYCDSCPTGYSGDGGNCV) is the EGF-like 4; calcium-binding domain. 3 consecutive EGF-like domains span residues 388–435 (KDDS…EGCV), 438–475 (ASNVCQNHNCVNAGKCKPTSDTEYKCECEAGFLGKFCE), and 476–512 (KTSPCQTNPCKNGGTCIAVENSAYCDCPEHFFGRACE). 10 CUB domains span residues 518–641 (CGSH…WETV), 645–763 (CGYR…YKFT), 769–934 (CGAE…YEML), 934–1061 (LCEK…YKTS), 1065–1182 (CGGV…FEAV), 1188–1300 (CDFT…YETI), 1304–1427 (CGGR…FTTL), 1428–1558 (CNGI…WNTL), 1560–1680 (CSRD…VEFV), and 1691–1841 (CGQV…MIPK). Residues Asn528, Asn537, and Asn583 are each glycosylated (N-linked (GlcNAc...) asparagine). 3 N-linked (GlcNAc...) asparagine glycosylation sites follow: Asn775, Asn806, and Asn811. Cys877 and Cys896 are joined by a disulfide. An N-linked (GlcNAc...) asparagine glycan is attached at Asn942. 3 disulfide bridges follow: Cys1065–Cys1091, Cys1120–Cys1145, and Cys1188–Cys1211. Asn1133 carries an N-linked (GlcNAc...) asparagine glycan. Asn1229 carries an N-linked (GlcNAc...) asparagine glycan. Residues Cys1234 and Cys1262 are joined by a disulfide bond. Asn1294 carries an N-linked (GlcNAc...) asparagine glycan. A disulfide bridge links Cys1304 with Cys1330. Asn1353 carries an N-linked (GlcNAc...) asparagine glycan. 3 disulfides stabilise this stretch: Cys1428–Cys1455, Cys1488–Cys1522, and Cys1560–Cys1586. An N-linked (GlcNAc...) asparagine glycan is attached at Asn1513. 4 N-linked (GlcNAc...) asparagine glycosylation sites follow: Asn1613, Asn1631, Asn1648, and Asn1674. Cys1614 and Cys1641 are oxidised to a cystine. A disulfide bond links Cys1691 and Cys1720. N-linked (GlcNAc...) asparagine glycans are attached at residues Asn1762, Asn1782, Asn1866, and Asn1890. An intrachain disulfide couples Cys1955 to Cys1979. In terms of domain architecture, CUB 11 spans 1955–2083 (CGGEVRHSQG…PLFKARYEKV (129 aa)). N-linked (GlcNAc...) asparagine glycosylation is found at Asn2005, Asn2016, and Asn2017. Cys2006 and Cys2027 are disulfide-bonded. The interval 2052–2071 (ASDGNDDDDDTPDIDQQDSN) is disordered. Over residues 2055–2067 (GNDDDDDTPDIDQ) the composition is skewed to acidic residues. Asn2193 is a glycosylation site (N-linked (GlcNAc...) asparagine). 2 cysteine pairs are disulfide-bonded: Cys2207-Cys2238 and Cys2265-Cys2295. CUB domains follow at residues 2207-2334 (CGGD…YRLT), 2335-2463 (CNSF…IKEQ), 2467-2588 (CPSG…YGIA), 2590-2717 (CGGT…VTMS), and 2721-2859 (CGGR…YMAI). Residues Asn2301 and Asn2305 are each glycosylated (N-linked (GlcNAc...) asparagine). Intrachain disulfides connect Cys2335–Cys2368 and Cys2395–Cys2424. Asn2434 carries an N-linked (GlcNAc...) asparagine glycan. Cystine bridges form between Cys2467–Cys2498 and Cys2590–Cys2619. Asn2599, Asn2645, Asn2657, and Asn2692 each carry an N-linked (GlcNAc...) asparagine glycan. Cys2646 and Cys2668 are joined by a disulfide. 2 cysteine pairs are disulfide-bonded: Cys2721–Cys2747 and Cys2786–Cys2809. Residues Asn2811, Asn2845, Asn2875, and Asn2988 are each glycosylated (N-linked (GlcNAc...) asparagine). Disulfide bonds link Cys2996–Cys3025, Cys3052–Cys3074, Cys3127–Cys3154, and Cys3181–Cys3217. CUB domains follow at residues 2996–3121 (CGGV…YEFL), 3127–3254 (CGYH…WEAE), 3255–3385 (CGAI…YSIN), 3387–3508 (CGDN…VISS), 3515–3641 (CGGK…YSIV), 3645–3783 (CGGW…YNIL), and 3786–3900 (CNRT…YYTV). N-linked (GlcNAc...) asparagine glycosylation is present at Asn3235. 3 disulfides stabilise this stretch: Cys3255–Cys3281, Cys3315–Cys3335, and Cys3387–Cys3418. N-linked (GlcNAc...) asparagine glycosylation is found at Asn3421 and Asn3461. Cystine bridges form between Cys3445/Cys3468 and Cys3515/Cys3544. An N-linked (GlcNAc...) asparagine glycan is attached at Asn3635. Disulfide bonds link Cys3645-Cys3680 and Cys3708-Cys3742. N-linked (GlcNAc...) asparagine glycosylation is found at Asn3770, Asn3787, Asn3812, Asn3858, and Asn3930. 2 disulfides stabilise this stretch: Cys3786–Cys3815 and Cys3845–Cys3863.

The protein localises to the secreted. Its function is as follows. Cotransporter which plays a role in lipoprotein, vitamin and iron metabolism, by facilitating their uptake. The sequence is that of Cubilin homolog from Caenorhabditis elegans.